We begin with the raw amino-acid sequence, 490 residues long: Bifunctional protein HldE (490 aa).

Residues 1–330 (MNNFDTLLQS…RKILPHASLA (330 aa)) form a ribokinase region. An ATP-binding site is contributed by 205–208 (NRKE). Residue Asp-275 is part of the active site. The cytidylyltransferase stretch occupies residues 358–490 (FTNGCFDILH…LVEKAREGTS (133 aa)).

This sequence in the N-terminal section; belongs to the carbohydrate kinase PfkB family. The protein in the C-terminal section; belongs to the cytidylyltransferase family. As to quaternary structure, homodimer.

The catalysed reaction is D-glycero-beta-D-manno-heptose 7-phosphate + ATP = D-glycero-beta-D-manno-heptose 1,7-bisphosphate + ADP + H(+). It catalyses the reaction D-glycero-beta-D-manno-heptose 1-phosphate + ATP + H(+) = ADP-D-glycero-beta-D-manno-heptose + diphosphate. The protein operates within nucleotide-sugar biosynthesis; ADP-L-glycero-beta-D-manno-heptose biosynthesis; ADP-L-glycero-beta-D-manno-heptose from D-glycero-beta-D-manno-heptose 7-phosphate: step 1/4. It functions in the pathway nucleotide-sugar biosynthesis; ADP-L-glycero-beta-D-manno-heptose biosynthesis; ADP-L-glycero-beta-D-manno-heptose from D-glycero-beta-D-manno-heptose 7-phosphate: step 3/4. In terms of biological role, catalyzes the phosphorylation of D-glycero-D-manno-heptose 7-phosphate at the C-1 position to selectively form D-glycero-beta-D-manno-heptose-1,7-bisphosphate. Its function is as follows. Catalyzes the ADP transfer from ATP to D-glycero-beta-D-manno-heptose 1-phosphate, yielding ADP-D-glycero-beta-D-manno-heptose. This is Bifunctional protein HldE from Rhodopseudomonas palustris (strain HaA2).